The sequence spans 267 residues: Indole-3-glycerol phosphate synthase (267 aa).

The protein belongs to the TrpC family.

It catalyses the reaction 1-(2-carboxyphenylamino)-1-deoxy-D-ribulose 5-phosphate + H(+) = (1S,2R)-1-C-(indol-3-yl)glycerol 3-phosphate + CO2 + H2O. It functions in the pathway amino-acid biosynthesis; L-tryptophan biosynthesis; L-tryptophan from chorismate: step 4/5. This chain is Indole-3-glycerol phosphate synthase, found in Delftia acidovorans (strain DSM 14801 / SPH-1).